The sequence spans 632 residues: Arginine--tRNA ligase (632 aa).

The 'HIGH' region signature appears at 120–130; sequence ANPIHPLHIGH.

It belongs to the class-I aminoacyl-tRNA synthetase family.

The protein localises to the cytoplasm. It catalyses the reaction tRNA(Arg) + L-arginine + ATP = L-arginyl-tRNA(Arg) + AMP + diphosphate. This chain is Arginine--tRNA ligase, found in Pyrobaculum islandicum (strain DSM 4184 / JCM 9189 / GEO3).